Consider the following 255-residue polypeptide: Small ribosomal subunit protein uS2 (255 aa).

Belongs to the universal ribosomal protein uS2 family.

The protein is Small ribosomal subunit protein uS2 of Streptococcus pyogenes serotype M3 (strain ATCC BAA-595 / MGAS315).